A 205-amino-acid chain; its full sequence is Protein phosphatase inhibitor 2 (205 aa).

Disordered stretches follow at residues M1–K46 and G64–S205. Residue A2 is modified to N-acetylalanine. Required for binding PPP1CC regions lie at residues K12–N17 and K43–T55. A compositionally biased stretch (polar residues) spans N17–V26. Positions S35–K46 are enriched in basic and acidic residues. S44 bears the Phosphoserine; by ATM mark. Position 73 is a phosphothreonine; by GSK3 (T73). Residues G80–T91 show a composition bias toward acidic residues. S87 carries the phosphoserine modification. T89, T92, and T96 each carry phosphothreonine. Positions S110 to E120 are enriched in basic and acidic residues. A phosphoserine mark is found at S121, S122, S127, and S130. Residues S121 to S130 are compositionally biased toward acidic residues. Residues P131 to K143 are compositionally biased toward basic and acidic residues. The interval H147–E150 is required for binding PPP1CC catalytic center, displacing metal ions and inhibition of PPP1CC catalytic activity. A compositionally biased stretch (acidic residues) spans D167 to D179. Over residues S182–S205 the composition is skewed to polar residues.

This sequence belongs to the protein phosphatase inhibitor 2 family. Heterodimer with PP1. Post-translationally, phosphorylation on Ser-44 by ATM activates PP1 by dissociating the PP1-PPP1R2 complex. Phosphorylation on Thr-73 by GSK3 activates PP1 by dissociating the PP1-PPP1R2 complex.

Inhibitor of protein-phosphatase 1. The polypeptide is Protein phosphatase inhibitor 2 (PPP1R2) (Oryctolagus cuniculus (Rabbit)).